The chain runs to 377 residues: Succinyl-diaminopimelate desuccinylase (377 aa).

A Zn(2+)-binding site is contributed by histidine 71. The active site involves aspartate 73. Position 102 (aspartate 102) interacts with Zn(2+). The active-site Proton acceptor is the glutamate 132. Residues glutamate 133, glutamate 161, and histidine 346 each contribute to the Zn(2+) site.

Belongs to the peptidase M20A family. DapE subfamily. In terms of assembly, homodimer. Zn(2+) serves as cofactor. Co(2+) is required as a cofactor.

It catalyses the reaction N-succinyl-(2S,6S)-2,6-diaminopimelate + H2O = (2S,6S)-2,6-diaminopimelate + succinate. It functions in the pathway amino-acid biosynthesis; L-lysine biosynthesis via DAP pathway; LL-2,6-diaminopimelate from (S)-tetrahydrodipicolinate (succinylase route): step 3/3. In terms of biological role, catalyzes the hydrolysis of N-succinyl-L,L-diaminopimelic acid (SDAP), forming succinate and LL-2,6-diaminopimelate (DAP), an intermediate involved in the bacterial biosynthesis of lysine and meso-diaminopimelic acid, an essential component of bacterial cell walls. This Rhizorhabdus wittichii (strain DSM 6014 / CCUG 31198 / JCM 15750 / NBRC 105917 / EY 4224 / RW1) (Sphingomonas wittichii) protein is Succinyl-diaminopimelate desuccinylase.